A 508-amino-acid polypeptide reads, in one-letter code: Transposase (508 aa).

Positions 3–65 (LLSVIRRWHF…PFADRLSAWL (63 aa)) constitute an HTH IS21-type domain. The Integrase catalytic domain occupies 124-299 (LAFEPGEAFQ…TIADIWVEEV (176 aa)).

This sequence belongs to the transposase IS21/IS408/IS1162 family.

Its function is as follows. Required for the transposition of the insertion element. In Aminobacter aminovorans (Chelatobacter heintzii), this protein is Transposase (nmoT).